The primary structure comprises 336 residues: Neuropeptides B/W receptor type 2 (336 aa).

A disordered region spans residues 1 to 25 (MMEATGLEGLESTSSPCPGSTGTGL). Residues 1–45 (MMEATGLEGLESTSSPCPGSTGTGLSWDNGTRHNATFPEPLPALY) lie on the Extracellular side of the membrane. Residues 12–25 (STSSPCPGSTGTGL) show a composition bias toward low complexity. 2 N-linked (GlcNAc...) asparagine glycosylation sites follow: asparagine 29 and asparagine 34. A helical transmembrane segment spans residues 46–68 (VLLPVVYSVICAVGLVGNAAVIC). At 69–80 (VILRAPKMKTVT) the chain is on the cytoplasmic side. A helical transmembrane segment spans residues 81-103 (HVFILNLAIADGLFTLVLPTNIA). Topologically, residues 104 to 127 (EHLLQRWPFGEVLCKLVLAIDHCN) are extracellular. Cysteine 117 and cysteine 197 are oxidised to a cystine. Residues 128-146 (IFSSVYFLAAMSIDRYLVV) form a helical membrane-spanning segment. Residues 147–165 (LATARSRRMPRRTVHRAKV) lie on the Cytoplasmic side of the membrane. A helical membrane pass occupies residues 166–188 (ASLCVWLGVTVAVLPFLTFAGVY). Over 189–213 (NNELQVTSCGLSFPRPERAWFQASR) the chain is Extracellular. The helical transmembrane segment at 214–236 (IYTLVLGFVVPMCTLCVLYADLL) threads the bilayer. At 237–256 (RRLRALRLHSGAKALGKAKR) the chain is on the cytoplasmic side. Residues 257 to 279 (KVSLLVLAVLAVGLLCWTPFHLA) form a helical membrane-spanning segment. At 280-293 (SIVALTTDLPQTPL) the chain is on the extracellular side. Residues 294–316 (VIIVSYVVTSLSYTSSCLNPFLY) traverse the membrane as a helical segment. The Cytoplasmic segment spans residues 317–336 (AFLDHSFRKSLRTACRCQGA).

This sequence belongs to the G-protein coupled receptor 1 family.

It is found in the cell membrane. In terms of biological role, interacts specifically with a number of opioid ligands. Receptor for neuropeptides B and W, which may be involved in neuroendocrine system regulation, food intake and the organization of other signals. This Bos taurus (Bovine) protein is Neuropeptides B/W receptor type 2 (NPBWR2).